Reading from the N-terminus, the 198-residue chain is Recombination protein RecR (198 aa).

The C4-type zinc finger occupies 56–71 (CKVCGNFSEEDECVIC). The Toprim domain occupies 79–174 (GVICVVEEPK…RVSKLASGLP (96 aa)).

It belongs to the RecR family.

In terms of biological role, may play a role in DNA repair. It seems to be involved in an RecBC-independent recombinational process of DNA repair. It may act with RecF and RecO. This Tropheryma whipplei (strain Twist) (Whipple's bacillus) protein is Recombination protein RecR.